A 139-amino-acid polypeptide reads, in one-letter code: Putative pre-16S rRNA nuclease (139 aa).

Belongs to the YqgF nuclease family.

It is found in the cytoplasm. Its function is as follows. Could be a nuclease involved in processing of the 5'-end of pre-16S rRNA. In Streptococcus agalactiae serotype Ia (strain ATCC 27591 / A909 / CDC SS700), this protein is Putative pre-16S rRNA nuclease.